The chain runs to 253 residues: Vitamin B12 import ATP-binding protein BtuD (253 aa).

The ABC transporter domain occupies Leu-4–Asp-236. Gly-32–Ser-39 provides a ligand contact to ATP.

It belongs to the ABC transporter superfamily. Vitamin B12 importer (TC 3.A.1.13.1) family. In terms of assembly, the complex is composed of two ATP-binding proteins (BtuD), two transmembrane proteins (BtuC) and a solute-binding protein (BtuF).

It localises to the cell inner membrane. It catalyses the reaction an R-cob(III)alamin(out) + ATP + H2O = an R-cob(III)alamin(in) + ADP + phosphate + H(+). In terms of biological role, part of the ABC transporter complex BtuCDF involved in vitamin B12 import. Responsible for energy coupling to the transport system. The sequence is that of Vitamin B12 import ATP-binding protein BtuD from Yersinia enterocolitica serotype O:8 / biotype 1B (strain NCTC 13174 / 8081).